Here is a 111-residue protein sequence, read N- to C-terminus: MIGTGGFIGASLRYTISSRVPKIQNIPAGTLTVNLLGSIVLALLTFSSEPESVVYLVNIGMLGSFTTFSTFAYETFRLLEDGQNISFFLNIFLNVMLCLLGVSIAYLALML.

3 helical membrane passes run 26-46, 53-73, and 91-111; these read IPAGTLTVNLLGSIVLALLTF, VVYLVNIGMLGSFTTFSTFAY, and IFLNVMLCLLGVSIAYLALML. Na(+) contacts are provided by Gly63 and Thr66.

The protein belongs to the fluoride channel Fluc/FEX (TC 1.A.43) family.

The protein localises to the cell membrane. The enzyme catalyses fluoride(in) = fluoride(out). Na(+) is not transported, but it plays an essential structural role and its presence is essential for fluoride channel function. In terms of biological role, fluoride-specific ion channel. Important for reducing fluoride concentration in the cell, thus reducing its toxicity. The sequence is that of Fluoride-specific ion channel FluC 3 from Methanosarcina acetivorans (strain ATCC 35395 / DSM 2834 / JCM 12185 / C2A).